A 269-amino-acid chain; its full sequence is Formamidopyrimidine-DNA glycosylase (269 aa).

Residue Pro-2 is the Schiff-base intermediate with DNA of the active site. The Proton donor role is filled by Glu-3. Lys-57 (proton donor; for beta-elimination activity) is an active-site residue. DNA-binding residues include His-90, Arg-109, and Arg-150. An FPG-type zinc finger spans residues 235–269 (NVYGRAGQPCVQCDAILKADRHGQRSTAYCPQCQR). Arg-259 serves as the catalytic Proton donor; for delta-elimination activity.

It belongs to the FPG family. In terms of assembly, monomer. Zn(2+) is required as a cofactor.

The enzyme catalyses Hydrolysis of DNA containing ring-opened 7-methylguanine residues, releasing 2,6-diamino-4-hydroxy-5-(N-methyl)formamidopyrimidine.. It carries out the reaction 2'-deoxyribonucleotide-(2'-deoxyribose 5'-phosphate)-2'-deoxyribonucleotide-DNA = a 3'-end 2'-deoxyribonucleotide-(2,3-dehydro-2,3-deoxyribose 5'-phosphate)-DNA + a 5'-end 5'-phospho-2'-deoxyribonucleoside-DNA + H(+). In terms of biological role, involved in base excision repair of DNA damaged by oxidation or by mutagenic agents. Acts as a DNA glycosylase that recognizes and removes damaged bases. Has a preference for oxidized purines, such as 7,8-dihydro-8-oxoguanine (8-oxoG). Has AP (apurinic/apyrimidinic) lyase activity and introduces nicks in the DNA strand. Cleaves the DNA backbone by beta-delta elimination to generate a single-strand break at the site of the removed base with both 3'- and 5'-phosphates. This Alcanivorax borkumensis (strain ATCC 700651 / DSM 11573 / NCIMB 13689 / SK2) protein is Formamidopyrimidine-DNA glycosylase.